A 117-amino-acid chain; its full sequence is MARVKRGVIARARHKKVLKAAKGYYGARSRVYRVAFQAVVKAAQYAYRDRRQRKRQFRQLWIARINAAARQNGLSYSKFINGLKKASVEIDRKILADIAVFDKVAFAALVAKAKSAL.

Belongs to the bacterial ribosomal protein bL20 family.

Its function is as follows. Binds directly to 23S ribosomal RNA and is necessary for the in vitro assembly process of the 50S ribosomal subunit. It is not involved in the protein synthesizing functions of that subunit. The sequence is that of Large ribosomal subunit protein bL20 from Glaesserella parasuis serovar 5 (strain SH0165) (Haemophilus parasuis).